The primary structure comprises 1009 residues: Serine/threonine-protein phosphatase BSL2 homolog (1009 aa).

The disordered stretch occupies residues 1-48 (MDVDSRMTTESDSDSDAAAQGGGGGGFGSETSSASPSAPGTPTAMGAG). Over residues 29 to 45 (SETSSASPSAPGTPTAM) the composition is skewed to low complexity. Kelch repeat units follow at residues 136-182 (SSAG…VATA), 240-288 (FLLT…TASA), 293-344 (LLLL…FVNA), 349-396 (SGGA…DAAG), and 417-463 (MIYV…IQAG). Positions 549 to 572 (QVNGEAEHSPDREQSPDATPSVKQ) are disordered. Positions 553–563 (EAEHSPDREQS) are enriched in basic and acidic residues. Mn(2+) contacts are provided by aspartate 711, histidine 713, aspartate 745, and asparagine 777. Histidine 778 acts as the Proton donor in catalysis. The Mn(2+) site is built by histidine 830 and histidine 909. A disordered region spans residues 984 to 1009 (NANRPPTPTRGRPQAANNDRGSLAWI).

The protein belongs to the PPP phosphatase family. BSU subfamily. The cofactor is Mn(2+).

It localises to the nucleus. The enzyme catalyses O-phospho-L-seryl-[protein] + H2O = L-seryl-[protein] + phosphate. It catalyses the reaction O-phospho-L-threonyl-[protein] + H2O = L-threonyl-[protein] + phosphate. In Oryza sativa subsp. japonica (Rice), this protein is Serine/threonine-protein phosphatase BSL2 homolog (BSL2).